Reading from the N-terminus, the 1380-residue chain is DNA-directed RNA polymerase subunit beta (1380 aa).

It belongs to the RNA polymerase beta chain family. In terms of assembly, the RNAP catalytic core consists of 2 alpha, 1 beta, 1 beta' and 1 omega subunit. When a sigma factor is associated with the core the holoenzyme is formed, which can initiate transcription.

The catalysed reaction is RNA(n) + a ribonucleoside 5'-triphosphate = RNA(n+1) + diphosphate. In terms of biological role, DNA-dependent RNA polymerase catalyzes the transcription of DNA into RNA using the four ribonucleoside triphosphates as substrates. The protein is DNA-directed RNA polymerase subunit beta of Ehrlichia ruminantium (strain Welgevonden).